A 309-amino-acid chain; its full sequence is Taste receptor type 2 member 64 (309 aa).

Over Met1–Tyr3 the chain is Extracellular. The helical transmembrane segment at Phe4 to Phe26 threads the bilayer. Residues Val27 to Gln46 are Cytoplasmic-facing. The chain crosses the membrane as a helical span at residues Ile47–Asn69. The Extracellular segment spans residues Val70–Val83. Residues Ala84–Tyr106 traverse the membrane as a helical segment. Residues Leu107–Arg126 are Cytoplasmic-facing. Residues Ser127–Met149 form a helical membrane-spanning segment. Residues Asp150–Asp176 lie on the Extracellular side of the membrane. An N-linked (GlcNAc...) asparagine glycan is attached at Asn161. Residues Leu177–Ile199 form a helical membrane-spanning segment. Residues Cys200 to Thr230 are Cytoplasmic-facing. A helical membrane pass occupies residues Val231–Trp253. Residues Thr254–Lys258 are Extracellular-facing. A helical transmembrane segment spans residues Leu259–Met281. The Cytoplasmic segment spans residues Gly282–Pro309.

Belongs to the G-protein coupled receptor T2R family.

Its subcellular location is the membrane. Its function is as follows. Receptor that may play a role in the perception of bitterness and is gustducin-linked. May play a role in sensing the chemical composition of the gastrointestinal content. The activity of this receptor may stimulate alpha gustducin, mediate PLC-beta-2 activation and lead to the gating of TRPM5. The sequence is that of Taste receptor type 2 member 64 (TAS2R64) from Pan paniscus (Pygmy chimpanzee).